We begin with the raw amino-acid sequence, 93 residues long: uncharacterized protein (93 aa).

The protein to E.coli YdbD C-terminal region.

This is an uncharacterized protein from Escherichia coli (strain K12).